We begin with the raw amino-acid sequence, 275 residues long: MSNSRQHQGHFARKRFGQNFLVDHGVIDAIVAAIRPERGERMVEIGPGLGALTGPVIARLATPGSPLHAVELDRDLIGRLEQRFGELLELHAGDALTFDFGSIARPGGEPSLRIIGNLPYNISSPLLFHLMSFAPVVIDQHFMLQNEVVERMVAEPGTKAFSRLSVMLQYRYVMDKLIDVPPESFQPPPKVDSAIVRMIPHAPHELPAVDPAVLGEVVTAAFSQRRKMLRNTLGGYRDLVDFDALGFDLARRAEDIGVDEYVRVAQAVASARASG.

Residues N19, L21, G46, E71, D94, and N117 each contribute to the S-adenosyl-L-methionine site.

Belongs to the class I-like SAM-binding methyltransferase superfamily. rRNA adenine N(6)-methyltransferase family. RsmA subfamily.

It is found in the cytoplasm. The enzyme catalyses adenosine(1518)/adenosine(1519) in 16S rRNA + 4 S-adenosyl-L-methionine = N(6)-dimethyladenosine(1518)/N(6)-dimethyladenosine(1519) in 16S rRNA + 4 S-adenosyl-L-homocysteine + 4 H(+). Its function is as follows. Specifically dimethylates two adjacent adenosines (A1518 and A1519) in the loop of a conserved hairpin near the 3'-end of 16S rRNA in the 30S particle. May play a critical role in biogenesis of 30S subunits. This Burkholderia pseudomallei (strain 668) protein is Ribosomal RNA small subunit methyltransferase A.